An 80-amino-acid chain; its full sequence is Putative membrane protein insertion efficiency factor (80 aa).

It belongs to the UPF0161 family.

The protein localises to the cell inner membrane. Could be involved in insertion of integral membrane proteins into the membrane. This is Putative membrane protein insertion efficiency factor from Syntrophobacter fumaroxidans (strain DSM 10017 / MPOB).